The following is a 384-amino-acid chain: Cytochrome b (384 aa).

The next 4 helical transmembrane spans lie at 32 to 52 (FGSL…FLAM), 76 to 98 (WLLR…LHMA), 113 to 133 (LWNM…MGYC), and 179 to 199 (FFSL…LHLL). Residues His-82 and His-96 each contribute to the heme b site. Positions 183 and 197 each coordinate heme b. His-202 serves as a coordination point for a ubiquinone. 4 consecutive transmembrane segments (helical) span residues 225 to 245 (FLFK…FLIS), 289 to 309 (MMGV…PFVD), 321 to 341 (LSKI…LIGA), and 348 to 368 (YIII…ILLP).

This sequence belongs to the cytochrome b family. As to quaternary structure, fungal cytochrome b-c1 complex contains 10 subunits; 3 respiratory subunits, 2 core proteins and 5 low-molecular weight proteins. Cytochrome b-c1 complex is a homodimer. It depends on heme b as a cofactor.

Its subcellular location is the mitochondrion inner membrane. In terms of biological role, component of the ubiquinol-cytochrome c reductase complex (complex III or cytochrome b-c1 complex) that is part of the mitochondrial respiratory chain. The b-c1 complex mediates electron transfer from ubiquinol to cytochrome c. Contributes to the generation of a proton gradient across the mitochondrial membrane that is then used for ATP synthesis. The polypeptide is Cytochrome b (COB) (Starmerella bacillaris (Yeast)).